A 152-amino-acid polypeptide reads, in one-letter code: Ribosomal RNA large subunit methyltransferase H (152 aa).

Residues L69, G96, and 118 to 123 each bind S-adenosyl-L-methionine; that span reads FGKLTF.

It belongs to the RNA methyltransferase RlmH family. In terms of assembly, homodimer.

The protein resides in the cytoplasm. The catalysed reaction is pseudouridine(1915) in 23S rRNA + S-adenosyl-L-methionine = N(3)-methylpseudouridine(1915) in 23S rRNA + S-adenosyl-L-homocysteine + H(+). Its function is as follows. Specifically methylates the pseudouridine at position 1915 (m3Psi1915) in 23S rRNA. This chain is Ribosomal RNA large subunit methyltransferase H, found in Mesomycoplasma hyopneumoniae (strain 7448) (Mycoplasma hyopneumoniae).